A 476-amino-acid chain; its full sequence is Amidophosphoribosyltransferase (476 aa).

The propeptide occupies methionine 1–glutamate 11. Cysteine 12 acts as the Nucleophile in catalysis. Residues cysteine 12–glutamate 231 form the Glutamine amidotransferase type-2 domain. Residue cysteine 247 participates in [4Fe-4S] cluster binding. Residues serine 294, aspartate 356, and aspartate 357 each contribute to the Mg(2+) site. Residues cysteine 393, cysteine 448, and cysteine 451 each coordinate [4Fe-4S] cluster.

The protein in the C-terminal section; belongs to the purine/pyrimidine phosphoribosyltransferase family. In terms of assembly, homotetramer. Mg(2+) serves as cofactor. It depends on [4Fe-4S] cluster as a cofactor.

The enzyme catalyses 5-phospho-beta-D-ribosylamine + L-glutamate + diphosphate = 5-phospho-alpha-D-ribose 1-diphosphate + L-glutamine + H2O. It participates in purine metabolism; IMP biosynthesis via de novo pathway; N(1)-(5-phospho-D-ribosyl)glycinamide from 5-phospho-alpha-D-ribose 1-diphosphate: step 1/2. Its activity is regulated as follows. Allosterically regulated; subject to end product regulation by purine nucleotides. In terms of biological role, catalyzes the formation of phosphoribosylamine from phosphoribosylpyrophosphate (PRPP) and glutamine. The chain is Amidophosphoribosyltransferase from Bacillus subtilis (strain 168).